A 114-amino-acid polypeptide reads, in one-letter code: Adapter SH3BGRL (114 aa).

The required for interaction with HER2 stretch occupies residues 13-50; it reads STAIKKKQQDVLGFLEANKIGFEEKDIAANEENRKWMR. The segment at 54–71 is required for interaction with PFN1, HER2, and ATG12; sequence PENSRPATGYPLPPQIFN. The short motif at 61–67 is the SH3-binding element; it reads TGYPLPP.

The protein belongs to the SH3BGR family. As to quaternary structure, monomer. Interacts with PFN1/Profilin-1. Interacts with ERBB2. Interacts with ATG12. Interacts with BECN1. Interacts with translating ribosomes. Ubiquitous.

The protein localises to the cytoplasm. It is found in the cytosol. The protein resides in the cell membrane. Functionally, appears to function as an adapter protein that bridges proteins together or proteins with mRNAs. May function as a ubiquitin ligase-substrate adapter. Additionally, associates with translating cytoplasmic ribosomes and may promote the expression of specific mRNAs. This Homo sapiens (Human) protein is Adapter SH3BGRL.